An 80-amino-acid polypeptide reads, in one-letter code: Exodeoxyribonuclease 7 small subunit (80 aa).

Belongs to the XseB family. As to quaternary structure, heterooligomer composed of large and small subunits.

The protein localises to the cytoplasm. It catalyses the reaction Exonucleolytic cleavage in either 5'- to 3'- or 3'- to 5'-direction to yield nucleoside 5'-phosphates.. Its function is as follows. Bidirectionally degrades single-stranded DNA into large acid-insoluble oligonucleotides, which are then degraded further into small acid-soluble oligonucleotides. In Pseudomonas aeruginosa (strain LESB58), this protein is Exodeoxyribonuclease 7 small subunit.